The primary structure comprises 442 residues: Radical S-adenosyl methionine domain-containing protein 1, mitochondrial (442 aa).

A mitochondrion-targeting transit peptide spans 1–17; sequence MVPSGVRTGRWVAAARA. Residues 34 to 270 form the Radical SAM core domain; it reads ESASTRAALY…RTVLRDAGFR (237 aa). Residue Tyr43 coordinates S-adenosyl-L-methionine. 3 residues coordinate [4Fe-4S] cluster: Cys49, Cys53, and Cys56. S-adenosyl-L-methionine contacts are provided by residues Gly98, 99–100, Glu131, Gln158, Arg170, and Asp195; that span reads GT.

This sequence belongs to the anaerobic coproporphyrinogen-III oxidase family. HemW subfamily. [4Fe-4S] cluster is required as a cofactor.

Its subcellular location is the mitochondrion. Functionally, may be a heme chaperone, appears to bind heme. Homologous bacterial proteins do not have oxygen-independent coproporphyrinogen-III oxidase activity. Binds 1 [4Fe-4S] cluster. The cluster is coordinated with 3 cysteines and an exchangeable S-adenosyl-L-methionine. This Mus musculus (Mouse) protein is Radical S-adenosyl methionine domain-containing protein 1, mitochondrial (Rsad1).